Consider the following 501-residue polypeptide: Uridine kinase (501 aa).

At serine 17 the chain carries Phosphoserine. 63–70 (GASGSGKT) contacts ATP. Serine 276 is modified (phosphoserine).

Belongs to the uridine kinase family.

Its subcellular location is the cytoplasm. It is found in the nucleus. It catalyses the reaction uridine + ATP = UMP + ADP + H(+). The enzyme catalyses cytidine + ATP = CMP + ADP + H(+). Its pathway is pyrimidine metabolism; CTP biosynthesis via salvage pathway; CTP from cytidine: step 1/3. The protein operates within pyrimidine metabolism; UMP biosynthesis via salvage pathway; UMP from uridine: step 1/1. Functionally, catalyzes the conversion of uridine into UMP and cytidine into CMP in the pyrimidine salvage pathway. The polypeptide is Uridine kinase (URK1) (Saccharomyces cerevisiae (strain ATCC 204508 / S288c) (Baker's yeast)).